The sequence spans 230 residues: Probable methylthioribulose-1-phosphate dehydratase (230 aa).

Position 87 (cysteine 87) interacts with substrate. Residues histidine 105 and histidine 107 each contribute to the Zn(2+) site. Residue glutamate 129 is the Proton donor/acceptor of the active site. Position 185 (histidine 185) interacts with Zn(2+).

This sequence belongs to the aldolase class II family. MtnB subfamily. The cofactor is Zn(2+).

The protein resides in the cytoplasm. It carries out the reaction 5-(methylsulfanyl)-D-ribulose 1-phosphate = 5-methylsulfanyl-2,3-dioxopentyl phosphate + H2O. The protein operates within amino-acid biosynthesis; L-methionine biosynthesis via salvage pathway; L-methionine from S-methyl-5-thio-alpha-D-ribose 1-phosphate: step 2/6. Functionally, catalyzes the dehydration of methylthioribulose-1-phosphate (MTRu-1-P) into 2,3-diketo-5-methylthiopentyl-1-phosphate (DK-MTP-1-P). In Drosophila virilis (Fruit fly), this protein is Probable methylthioribulose-1-phosphate dehydratase.